A 512-amino-acid chain; its full sequence is Apolipoprotein N-acyltransferase (512 aa).

6 helical membrane passes run 5–25 (LDKY…FAAA), 56–76 (FAVS…FYWI), 92–112 (VPLT…CFWL), 118–138 (LPRG…TEFA), 168–188 (LGGI…LVLA), and 195–215 (SGKR…GYTA). Residues 233-477 (LQGNIDQTLK…ETVLEGHIKG (245 aa)) enclose the CN hydrolase domain. Glutamate 271 serves as the catalytic Proton acceptor. Lysine 337 is a catalytic residue. Cysteine 389 serves as the catalytic Nucleophile. A helical transmembrane segment spans residues 487–507 (TGSSWWLMGILALAALILFIF).

The protein belongs to the CN hydrolase family. Apolipoprotein N-acyltransferase subfamily.

It localises to the cell inner membrane. It carries out the reaction N-terminal S-1,2-diacyl-sn-glyceryl-L-cysteinyl-[lipoprotein] + a glycerophospholipid = N-acyl-S-1,2-diacyl-sn-glyceryl-L-cysteinyl-[lipoprotein] + a 2-acyl-sn-glycero-3-phospholipid + H(+). It participates in protein modification; lipoprotein biosynthesis (N-acyl transfer). In terms of biological role, catalyzes the phospholipid dependent N-acylation of the N-terminal cysteine of apolipoprotein, the last step in lipoprotein maturation. This chain is Apolipoprotein N-acyltransferase, found in Neisseria meningitidis serogroup B (strain ATCC BAA-335 / MC58).